The primary structure comprises 247 residues: LOB domain-containing protein 38 (247 aa).

In terms of domain architecture, LOB spans 1–107; sequence MSCNGCRVLR…VETVLRGGSL (107 aa). Low complexity predominate over residues 157 to 170; sequence FSSSRSRSRSTASP. The interval 157–184 is disordered; sequence FSSSRSRSRSTASPPKRKRLSSEQQPSS.

The protein belongs to the LOB domain-containing protein family. As to expression, expressed in young shoots, roots, stems, leaves and flowers.

The polypeptide is LOB domain-containing protein 38 (LBD38) (Arabidopsis thaliana (Mouse-ear cress)).